An 856-amino-acid chain; its full sequence is MVGRLFRAHGQFCASHPWEVIVATLTLTVCMLTVDQRPLGLPPGWGHNCITLEEYNAADMIVMTLIRCVAVLYSYYQFCHLQKLGSKYILGIAGLFTVFSSFVFSSSVINFLGSDVSDLKDALFFFLLLIDLSKATVLAQFALSSRSQDEVKHNIARGIAMLGPTITLDTVVETLVIGVGMLSGVRRLEVLCCFACMSVIVNYVVFMTFYPACLSLILELSRSGESGRPAWHDKSLIIKALHEEDQKPNPVVQRVKVIMSAGLMLVHAHRWVRCLSIALWPDLTSLRYFCTHCDTGVSYSRWSFASEGEELPTVKLVTGDSVVNSNSTDDAQLHYYIMRWLTVSADHIVILILLLALAVKFVFFETRDELTTTRGMDGWVEVSSPVEHKYVQTEQPSCSAPEQPLEEPPASNRSIDECLSVCKSDVGAQALSDCEVMALVTSGHIAGYQLEKVVRNPERGVGIRRQILTKTADLKDALDNLPYKNYDYLKVMGACCENVIGYMPVPVGVAGPLNLDGRLVHVPLATTEGCLVASTNRGMRALMRCGVTSRIVADGMTRGPVVRFPNIDRASEAMLWMQVPYNFEQIKKNFDSTSRFARLSKIHIRVAGRHLFIRFIATTGDAMGMNMLSKGTEVALAYVQQVYPDMEILSLSGNFCTDKKPAAVNWIEGRGKSVVCEAIVPADIIKSVLKTSVQALMDVNITKNLIGSAVAGSIGGFNAHAANIVTAIFIATGQDPAQNVGSSNCMTLMEPWGEDGKDLYVSCTMPSIEIGTIGGGTVLPPQAACLDMLGVRGANEMCPGENANTLARIVCGTVLAGELSLMSALAAGHLVKSHMRHNRSSVSTSGSEPSTPACKS.

The next 4 helical transmembrane spans lie at 12–32 (FCAS…VCML), 89–109 (ILGI…SSVI), 123–143 (LFFF…QFAL), and 190–210 (VLCC…MTFY). N-linked (GlcNAc...) asparagine glycosylation is present at asparagine 326. A helical transmembrane segment spans residues 344 to 364 (SADHIVILILLLALAVKFVFF). Positions 365–443 (ETRDELTTTR…CEVMALVTSG (79 aa)) are linker. The N-linked (GlcNAc...) asparagine glycan is linked to asparagine 412. A catalytic region spans residues 443 to 771 (GHIAGYQLEK…SCTMPSIEIG (329 aa)). Residues glutamate 528 and lysine 659 each act as charge relay system in the active site. An N-linked (GlcNAc...) asparagine glycan is attached at asparagine 700. The active-site Charge relay system is aspartate 735. The active-site Proton donor is the histidine 834. A disordered region spans residues 836 to 856 (RHNRSSVSTSGSEPSTPACKS). Asparagine 838 is a glycosylation site (N-linked (GlcNAc...) asparagine). Residues 840–856 (SSVSTSGSEPSTPACKS) show a composition bias toward low complexity.

The protein belongs to the HMG-CoA reductase family.

It localises to the endoplasmic reticulum membrane. The catalysed reaction is (R)-mevalonate + 2 NADP(+) + CoA = (3S)-3-hydroxy-3-methylglutaryl-CoA + 2 NADPH + 2 H(+). It functions in the pathway metabolic intermediate biosynthesis; (R)-mevalonate biosynthesis; (R)-mevalonate from acetyl-CoA: step 3/3. With respect to regulation, the activity of HMG-CoA-reductase is suppressed by exogenous mevalonate. Synthesis of mevalonate for the production of non-sterol isoprenoids, which are essential for growth differentiation. This chain is 3-hydroxy-3-methylglutaryl-coenzyme A reductase, found in Blattella germanica (German cockroach).